The chain runs to 370 residues: Actin-related protein 2/3 complex subunit 1A (370 aa).

WD repeat units follow at residues 6 to 45 (FLLEPITCHAWNRDRTQIALSPNNHEVHIYKKNGSQWTKA), 50 to 89 (EHNGHITGIDWAPKSDRIVTCGADRNAYVWSQKDGIWKPT), 140 to 179 (PIRSTVLSLDWHPNNVLLAAGSCDFKCRVFSAYIKEVDEK), 202 to 241 (GTGGWVHGVSFSASGNRLAWVSHDSTVSVADASKSVQVST), 244 to 284 (TEFL…TFVS), and 322 to 365 (LHQN…SSIQ).

This sequence belongs to the WD repeat ARPC1 family. As to quaternary structure, probable component of the Arp2/3 complex in which it may replace ARPC1B.

It localises to the cytoplasm. It is found in the cytoskeleton. Its subcellular location is the nucleus. In terms of biological role, probably functions as a component of the Arp2/3 complex which is involved in regulation of actin polymerization and together with an activating nucleation-promoting factor (NPF) mediates the formation of branched actin networks. In addition to its role in the cytoplasmic cytoskeleton, the Arp2/3 complex also promotes actin polymerization in the nucleus, thereby regulating gene transcription and repair of damaged DNA. In Mus musculus (Mouse), this protein is Actin-related protein 2/3 complex subunit 1A (Arpc1a).